Consider the following 131-residue polypeptide: Small ribosomal subunit protein uS9 (131 aa).

This sequence belongs to the universal ribosomal protein uS9 family.

This Actinobacillus pleuropneumoniae serotype 5b (strain L20) protein is Small ribosomal subunit protein uS9.